The primary structure comprises 345 residues: MAAGSGSGTPPGTPPPTLLTDLATGLWKTQTLTAAIETGLFEALAAGDADAPETAQRLGIGKRPAEILLTACTALGLLEQRDGRYRNTAVAAHYLVPGLPDYFGGYVQMVARYTAPGWLRATEAVRTDAPTKPVPDPDRNMFEEGNRPESFWEGLFTFSTLTARQLAASVDLSGVRRIMDVGGGAGATLIELCRQHPHLSGTVVDLPHVCALAGERIAAAGMTGRIDTAAADFFADPLPSGHDAVLLSMILHDWDESQNRKILASCLDALPSGGTVLISELLVDDDKSGPVDAALMSMNMLVGTWGRNYTGAEYTDWLRDAGCSEVRTVRFASPGANGVVAGVKA.

D205 provides a ligand contact to S-adenosyl-L-methionine. The active-site Proton acceptor is H252.

This sequence belongs to the class I-like SAM-binding methyltransferase superfamily. Cation-independent O-methyltransferase family.

It carries out the reaction 3-hydroxy-5-methyl-1-naphthoate + S-adenosyl-L-methionine = 3-methoxy-5-methyl-1-naphthoate + S-adenosyl-L-homocysteine + H(+). Its pathway is antibiotic biosynthesis. With respect to regulation, inhibited by different divalent cations, such as Mg(2+), Mn(2+), Fe(2+), Cu(2+) and Zn(2+). In terms of biological role, O-methyltransferase that mediates the formation of 3-methoxy-5-methyl-1-naphthoate from 3-hydroxy-5-methyl-1-naphthoate in the biosynthesis of the antitumor antibiotic azinomycin B. This Streptomyces sahachiroi protein is 3-hydroxy-5-methyl-1-naphthoate 3-O-methyltransferase.